A 288-amino-acid chain; its full sequence is Syntaxin PEP12 (288 aa).

Residues 1-268 are Cytoplasmic-facing; it reads MSEDEFFGGD…RYQKRTSRWR (268 aa). Residues S2 and S23 each carry the phosphoserine modification. In terms of domain architecture, t-SNARE coiled-coil homology spans 195-257; that stretch reads QNLIEQRDQE…QLASDELRKA (63 aa). Residues 269-288 form a helical; Anchor for type IV membrane protein membrane-spanning segment; that stretch reads VYLLIVLLVMLLFIFLIMKL.

This sequence belongs to the syntaxin family. In terms of processing, ubiquitinated.

The protein localises to the membrane. Its function is as follows. Plays a role in the sorting and targeting of vacuolar proteases. This Saccharomyces cerevisiae (strain ATCC 204508 / S288c) (Baker's yeast) protein is Syntaxin PEP12 (PEP12).